The sequence spans 1096 residues: Inactive phospholipase C-like protein 1 (1096 aa).

The tract at residues 1-101 (MAEGAASREA…KKTVSFSSMP (101 aa)) is disordered. At Ser-48 the chain carries Phosphoserine. Low complexity predominate over residues 49–60 (GVALPGAAGVPA). At Ser-78 the chain carries Phosphoserine. The interaction with PPP1C stretch occupies residues 83-222 (PSNQKCGGRK…NIWVSGLRYL (140 aa)). Thr-94 carries the phosphothreonine modification. Phosphothreonine; by PKA is present on Thr-94. A Phosphoserine; by PKA modification is found at Ser-96. The PH domain maps to 114-224 (SFMQAGCELK…WVSGLRYLVS (111 aa)). Positions 399–543 (QDMTQPLSHY…LKNMIIVKGK (145 aa)) constitute a PI-PLC X-box domain. The segment at 544 to 568 (KLPSESDLLEGEVTDEDEEAEMSRR) is interaction with GABA A beta subunit. Acidic residues predominate over residues 550-563 (DLLEGEVTDEDEEA). A disordered region spans residues 550-569 (DLLEGEVTDEDEEAEMSRRM). At Thr-557 the chain carries Phosphothreonine. Ser-570 carries the post-translational modification Phosphoserine. The PI-PLC Y-box domain occupies 586 to 702 (LSDLVSICKS…GYVLRPSIMR (117 aa)). Residues 702-831 (RDEVSYFSAN…PGYRHVPLRS (130 aa)) form the C2 domain. The stretch at 1040 to 1060 (DLLKNAKNEAVENIKQIQLAC) forms a coiled coil. The tract at residues 1067–1096 (KGPGGGSEAKGKRSLEAIEEKESSEENGKL) is disordered. A compositionally biased stretch (basic and acidic residues) spans 1075 to 1096 (AKGKRSLEAIEEKESSEENGKL). Residue Ser-1080 is modified to Phosphoserine.

As to quaternary structure, interacts with PPP2CA, Ins(1,4,5)P3, Ins(1,4,5,6)P4 GABARAP, GABA receptor beta subunits, GABA receptor gamma-2 subunits and PPP1C. May form a ternary complex with GABA receptor beta subunit and GABARAP. The formation of a ternary complex with GABA receptor beta subunit and GABARAP could be the key step for facilitating the association of GABARAP with the GABA receptor gamma-2 subunit and to allow it to be transported at the right destination. Phosphorylated by the catalytic subunit of PKA. Phosphorylation of Thr-94 resulted in dissociation of PPP1C from PRIP1.

Its subcellular location is the cytoplasm. In terms of biological role, involved in an inositol phospholipid-based intracellular signaling cascade. Shows no PLC activity to phosphatidylinositol 4,5-bisphosphate and phosphatidylinositol. Component in the phospho-dependent endocytosis process of GABA A receptor. Acts as an inhibitor of PPP1C. Involved in the assembly and/or the trafficking of gamma-2 subunit-containing GABA A receptors. The protein is Inactive phospholipase C-like protein 1 (Plcl1) of Mus musculus (Mouse).